The sequence spans 226 residues: MNFLKSFPFFAFLYFGQYFVAVTHAATFDIVNKCTYTVWAAASPGGGRRLDSGQSWSINVNPGTVQARIWGRTNCNFDGSGRGNCETGDCNGMLECQGYGKAPNTLAEFALNQPNQDFVDISLVDGFNIPMEFSPTNGGCRNLRCTAPINEQCPAQLKTQGGCNNPCTVIKTNEYCCTNGPGSCGPTDLSRFFKERCPDAYSYPQDDPTSLFTCPSGTNYRVVFCP.

The N-terminal stretch at 1–25 (MNFLKSFPFFAFLYFGQYFVAVTHA) is a signal peptide. 8 cysteine pairs are disulfide-bonded: Cys-34–Cys-225, Cys-75–Cys-85, Cys-90–Cys-96, Cys-140–Cys-214, Cys-145–Cys-197, Cys-153–Cys-163, Cys-167–Cys-176, and Cys-177–Cys-184.

This sequence belongs to the thaumatin family.

It localises to the vacuole. The sequence is that of Pathogenesis-related protein R major form from Nicotiana tabacum (Common tobacco).